Here is a 497-residue protein sequence, read N- to C-terminus: Envelope glycoprotein E (497 aa).

Topologically, residues 1–398 (MCVFQILIIV…GTIIYDILLT (398 aa)) are virion surface. Residues Asn-60, Asn-133, Asn-148, Asn-203, Asn-277, Asn-366, and Asn-388 are each glycosylated (N-linked (GlcNAc...) asparagine; by host). The chain crosses the membrane as a helical span at residues 399–419 (SLSIGAIIIVIVGGVCIAILI). At 420-497 (RRRRRRRTRG…KIRKRLDLYH (78 aa)) the chain is on the intravirion side.

The protein belongs to the alphaherpesvirinae glycoprotein E family. In terms of assembly, interacts with gI. Post-translationally, phosphorylated within the acidic cluster. Phosphorylation determines whether endocytosed viral gE traffics to the trans-Golgi network or recycles to the cell membrane.

It localises to the virion membrane. It is found in the host cell membrane. The protein localises to the host cell junction. The protein resides in the host Golgi apparatus membrane. Its subcellular location is the host endosome membrane. Functionally, in epithelial cells, the heterodimer gE/gI is required for the cell-to-cell spread of the virus, by sorting nascent virions to cell junctions. Once the virus reaches the cell junctions, virus particles can spread to adjacent cells extremely rapidly through interactions with cellular receptors that accumulate at these junctions. Implicated in basolateral spread in polarized cells. In neuronal cells, gE/gI is essential for the anterograde spread of the infection throughout the host nervous system. Together with US9, the heterodimer gE/gI is involved in the sorting and transport of viral structural components toward axon tips. The protein is Envelope glycoprotein E (MDV096) of Gallus gallus (Chicken).